Reading from the N-terminus, the 467-residue chain is Interleukin-6 receptor subunit alpha (467 aa).

The N-terminal stretch at 1–19 (MLAVGCALLTALLAAPGMA) is a signal peptide. One can recognise an Ig-like C2-type domain in the interval 20–112 (LAPRGCSKLE…AGSVRLLVDA (93 aa)). Topologically, residues 20-365 (LAPRGCSKLE…VQDSASVPLP (346 aa)) are extracellular. 4 cysteine pairs are disulfide-bonded: Cys25-Cys193, Cys47-Cys96, Cys121-Cys132, and Cys165-Cys176. N-linked (GlcNAc...) asparagine glycosylation is found at Asn55 and Asn93. Fibronectin type-III domains are found at residues 113-217 (PPEE…LQPD) and 218-316 (PPVN…IPWT). Residues Asn221 and Asn245 are each glycosylated (N-linked (GlcNAc...) asparagine). A WSXWS motif motif is present at residues 303–307 (WSEWS). Residues 315-357 (WTESRSSPAETELPLSTQAPTTNEDDEDISSKESANATSLPVQ) form a disordered region. Polar residues-rich tracts occupy residues 317-336 (ESRS…APTT) and 346-357 (KESANATSLPVQ). Residue Asn350 is glycosylated (N-linked (GlcNAc...) asparagine). A glycan (O-linked (GlcNAc) threonine) is linked at Thr352. Residues 366-386 (TFLVAGGSLAFGTLLCIGIIL) form a helical membrane-spanning segment. Residues 387–467 (RFKKTGQLQA…VSNRDYFFPR (81 aa)) lie on the Cytoplasmic side of the membrane. The interval 428 to 467 (ISPPVSPNSLGDNTSRNSRPEARGPQSPYDVSNRDYFFPR) is disordered.

Belongs to the type I cytokine receptor family. Type 3 subfamily. Component of a hexamer of two molecules each of IL6, IL6R and IL6ST; first binds to IL6 to associate with the signaling subunit IL6ST. Interacts (via N-terminal ectodomain) with SORL1; this interaction may affect IL6-binding to IL6R, hence decrease IL6 'classic-signaling'. As to quaternary structure, also interacts with SORL1; this interaction leads to soluble IL6R internalization. May form a trimeric complex with the soluble SORL1 ectodomain and circulating IL6 receptor; this interaction might stabilize circulating IL6, hence promote IL6 'trans-signaling'. In terms of processing, a short soluble form is also released from the membrane by proteolysis. The sIL6R is formed by limited proteolysis of membrane-bound receptors, a process referred to as ectodomain shedding. mIL6R is cleaved by the proteases ADAM10 and ADAM17. Glycosylated. Glycosylation is dispensable for transport, signaling, and cell-surface turnover. Glycosylation at Asn-55 is a protease-regulatory exosite. Glycosylation is required for ADAM17-mediated proteolysis. As to expression, expressed in liver.

The protein resides in the cell membrane. The protein localises to the secreted. Classic and trans-signaling are both inhibited by tocilizumab, a humanized monoclonal antibody that blocks interleukin IL6R signaling. In terms of biological role, part of the receptor for interleukin 6. Binds to IL6 with low affinity, but does not transduce a signal. Signal activation necessitate an association with IL6ST. Activation leads to the regulation of the immune response, acute-phase reactions and hematopoiesis. The interaction with membrane-bound IL6R and IL6ST stimulates 'classic signaling', the restricted expression of the IL6R limits classic IL6 signaling to only a few tissues such as the liver and some cells of the immune system. Whereas the binding of IL6 and soluble IL6R to IL6ST stimulates 'trans-signaling'. Alternatively, 'cluster signaling' occurs when membrane-bound IL6:IL6R complexes on transmitter cells activate IL6ST receptors on neighboring receiver cells. Functionally, signaling via the membrane-bound IL6R is mostly regenerative and anti-inflammatory. Drives naive CD4(+) T cells to the Th17 lineage, through 'cluster signaling' by dendritic cells. Soluble form of IL6 receptor (sIL6R) that acts as an agonist of IL6 activity. The IL6:sIL6R complex (hyper-IL6) binds to IL6ST/gp130 on cell surfaces and induces signaling also on cells that do not express membrane-bound IL6R in a process called IL6 'trans-signaling'. sIL6R is causative for the pro-inflammatory properties of IL6 and an important player in the development of chronic inflammatory diseases. In complex with IL6, is required for induction of VEGF production. Plays a protective role during liver injury, being required for maintenance of tissue regeneration. 'Trans-signaling' in central nervous system regulates energy and glucose homeostasis. The sequence is that of Interleukin-6 receptor subunit alpha (IL6R) from Sus scrofa (Pig).